The primary structure comprises 253 residues: Sulfate transporter CysZ (253 aa).

A run of 4 helical transmembrane segments spans residues 31 to 51, 75 to 95, 151 to 171, and 222 to 242; these read FVIL…WWLF, LLWP…FSTI, IVLL…PVLW, and IPLL…AMWV.

Belongs to the CysZ family.

The protein resides in the cell inner membrane. Functionally, high affinity, high specificity proton-dependent sulfate transporter, which mediates sulfate uptake. Provides the sulfur source for the cysteine synthesis pathway. This Escherichia coli O8 (strain IAI1) protein is Sulfate transporter CysZ.